Reading from the N-terminus, the 522-residue chain is Acetylcholine receptor subunit delta (522 aa).

The signal sequence occupies residues 1 to 21 (MGNIHFVYLLISCLYYSGCSG). The Extracellular segment spans residues 22-245 (VNEEERLIND…VTFYLIIRRK (224 aa)). Residues Asn-91, Asn-164, and Asn-229 are each glycosylated (N-linked (GlcNAc...) asparagine). The cysteines at positions 151 and 165 are disulfide-linked. 3 consecutive transmembrane segments (helical) span residues 246–270 (PLFY…AFYL), 278–295 (MSTA…LLLT), and 312–333 (YLMF…VLNF). The Cytoplasmic portion of the chain corresponds to 334–476 (HFRTPSTHVL…WNLVGQTIDR (143 aa)). Residue Tyr-393 is modified to Phosphotyrosine; by Tyr-kinases. The helical transmembrane segment at 477–497 (LSMFIITPVMVLGTIFIFVMG) threads the bilayer.

This sequence belongs to the ligand-gated ion channel (TC 1.A.9) family. Acetylcholine receptor (TC 1.A.9.1) subfamily. In terms of assembly, pentamer of two alpha chains, and one each of the beta, delta, and gamma chains.

The protein resides in the postsynaptic cell membrane. Its subcellular location is the cell membrane. It catalyses the reaction K(+)(in) = K(+)(out). The catalysed reaction is Na(+)(in) = Na(+)(out). After binding acetylcholine, the AChR responds by an extensive change in conformation that affects all subunits and leads to opening of an ion-conducting channel across the plasma membrane. The chain is Acetylcholine receptor subunit delta (chrnd) from Tetronarce californica (Pacific electric ray).